We begin with the raw amino-acid sequence, 79 residues long: Conotoxin Vi6.9 (79 aa).

Positions 1–22 are cleaved as a signal peptide; it reads MKLTCMVIITVLFLTASQLITA. The propeptide occupies 23–47; that stretch reads DYSRDQRQYRAVRLGDEMRNFKGAR. 3 disulfide bridges follow: C49/C62, C56/C67, and C61/C77. P60 and P63 each carry 4-hydroxyproline.

Belongs to the conotoxin O1 superfamily. In terms of tissue distribution, expressed by the venom duct.

It localises to the secreted. In terms of biological role, ion channel inhibitor that inhibits the increase in intracellular calcium upon depolarization in DRG neurons. In vivo, both intraperitoneal and intracranial injections into mice induce hyperactivity. This Conus virgo (Virgin cone) protein is Conotoxin Vi6.9.